The sequence spans 111 residues: Large ribosomal subunit protein uL22 (111 aa).

It belongs to the universal ribosomal protein uL22 family. Part of the 50S ribosomal subunit.

Its function is as follows. This protein binds specifically to 23S rRNA; its binding is stimulated by other ribosomal proteins, e.g. L4, L17, and L20. It is important during the early stages of 50S assembly. It makes multiple contacts with different domains of the 23S rRNA in the assembled 50S subunit and ribosome. Functionally, the globular domain of the protein is located near the polypeptide exit tunnel on the outside of the subunit, while an extended beta-hairpin is found that lines the wall of the exit tunnel in the center of the 70S ribosome. The sequence is that of Large ribosomal subunit protein uL22 from Alkalilimnicola ehrlichii (strain ATCC BAA-1101 / DSM 17681 / MLHE-1).